We begin with the raw amino-acid sequence, 336 residues long: uncharacterized protein (336 aa).

Positions Met1–Ala21 are cleaved as a signal peptide. Residue Lys38 participates in NADP(+) binding. Thr153 carries the post-translational modification Phosphothreonine. Tyr167 contacts NADP(+).

Belongs to the NAD(P)-dependent epimerase/dehydratase family. Dihydroflavonol-4-reductase subfamily.

This is an uncharacterized protein from Schizosaccharomyces pombe (strain 972 / ATCC 24843) (Fission yeast).